A 138-amino-acid polypeptide reads, in one-letter code: Large ribosomal subunit protein uL16 (138 aa).

This sequence belongs to the universal ribosomal protein uL16 family. Part of the 50S ribosomal subunit.

Its function is as follows. Binds 23S rRNA and is also seen to make contacts with the A and possibly P site tRNAs. The polypeptide is Large ribosomal subunit protein uL16 (Mycoplasma genitalium (strain ATCC 33530 / DSM 19775 / NCTC 10195 / G37) (Mycoplasmoides genitalium)).